A 299-amino-acid polypeptide reads, in one-letter code: MPELPEVETVRRGLAPAMVGARVARVTLRRPNLRFPFPERFAERLEGTTVLELARRAKYLTAHLDSGESLILHLGMSGRFDVRLPDGSNLSPGDFYLEGALGTPKHDHVVMAFANGATVTYNDARRFGFMDLVATRDLETCRHFASMGVEPLSDALDAPLLARLFARKITPLKAALLDQRLIAGLGNIYVCEALHRSGLHPALPAGALAKPDGSPAPKAKTLVKEIKAVLTEAVAAGGSTLRDYARPDGERGAFQHGFRVYDRVGHACPTKGCTGRVGRIVQGGRSTFFCETCQVLPVR.

The active-site Schiff-base intermediate with DNA is the Pro2. The Proton donor role is filled by Glu3. Lys58 serves as the catalytic Proton donor; for beta-elimination activity. The DNA site is built by His106, Arg125, and Lys168. The FPG-type zinc-finger motif lies at 259 to 295 (RVYDRVGHACPTKGCTGRVGRIVQGGRSTFFCETCQV). The Proton donor; for delta-elimination activity role is filled by Arg285.

This sequence belongs to the FPG family. In terms of assembly, monomer. The cofactor is Zn(2+).

The catalysed reaction is Hydrolysis of DNA containing ring-opened 7-methylguanine residues, releasing 2,6-diamino-4-hydroxy-5-(N-methyl)formamidopyrimidine.. It carries out the reaction 2'-deoxyribonucleotide-(2'-deoxyribose 5'-phosphate)-2'-deoxyribonucleotide-DNA = a 3'-end 2'-deoxyribonucleotide-(2,3-dehydro-2,3-deoxyribose 5'-phosphate)-DNA + a 5'-end 5'-phospho-2'-deoxyribonucleoside-DNA + H(+). Its function is as follows. Involved in base excision repair of DNA damaged by oxidation or by mutagenic agents. Acts as a DNA glycosylase that recognizes and removes damaged bases. Has a preference for oxidized purines, such as 7,8-dihydro-8-oxoguanine (8-oxoG). Has AP (apurinic/apyrimidinic) lyase activity and introduces nicks in the DNA strand. Cleaves the DNA backbone by beta-delta elimination to generate a single-strand break at the site of the removed base with both 3'- and 5'-phosphates. This chain is Formamidopyrimidine-DNA glycosylase, found in Methylorubrum extorquens (strain CM4 / NCIMB 13688) (Methylobacterium extorquens).